Consider the following 442-residue polypeptide: UDP-N-acetylmuramate--L-alanine ligase (442 aa).

109–115 (GAHGKTS) provides a ligand contact to ATP.

The protein belongs to the MurCDEF family.

Its subcellular location is the cytoplasm. The enzyme catalyses UDP-N-acetyl-alpha-D-muramate + L-alanine + ATP = UDP-N-acetyl-alpha-D-muramoyl-L-alanine + ADP + phosphate + H(+). The protein operates within cell wall biogenesis; peptidoglycan biosynthesis. Cell wall formation. The polypeptide is UDP-N-acetylmuramate--L-alanine ligase (Streptococcus pyogenes serotype M6 (strain ATCC BAA-946 / MGAS10394)).